A 617-amino-acid polypeptide reads, in one-letter code: MVNKTAQLKQALENRILILDGAMGTMIQKYKLTEDDFRGEKFKKSAVDSVAEWCTWPVGELLKHALVKGITTCQTLPSPLDVIEGPLMAGMDVVGDLFGDGKMFLPQVVKSARVMKQSVAYLEPFXNATKQKGSSNGKVVIATVKGDVHDIGKNIVSVVMQCNNFEVIDLGVMVPADKIIQTAINQKTDIIALSGLITPSLDEMEYFLGEMTRLGLNLPVMIGGATTSKEHTAIKLYPKYKQHCVFYTSNASRAVTVCATLMNPEGRAALWEQFKKDYEKIQQSFANSKPLRKQLSIEEARDGFSGEWADYVPPTPKQTGIVEFKNVPIAELRKFIDWSPFFRIWGLMGCYPDAFDYPEGGEEARKVWNDAQVVLDELEQNHKLNPSGILGIFPAERVGDDVVLFSDEERTQTIGTAYGLRQQTERGKNSKSPFNFCLSDFIADRQSGKKNWFGMFAVCVGVEEMELVEGYKAAGDDYNAILLQAVGDRLAEAMAEYLHFELRTRIWGYTQEEFDNQGLINENYVGIRPAPGYPSWPEHTEKALIWDLLEVEQRIGMKLTESYAMWPAASVCGWYFTHPASNYFTLGRIDEDQAQDYAKRKGWDEREMMKWLGVAMK.

The region spanning 33–134 (TEDDFRGEKF…FXNATKQKGS (102 aa)) is the B12-binding N-terminal domain. Methylcob(III)alamin is bound by residues glutamate 84, 146–150 (GDVHD), histidine 149, serine 194, threonine 198, and alanine 251. A B12-binding domain is found at 136 to 272 (NGKVVIATVK…NPEGRAALWE (137 aa)). Positions 288-617 (SKPLRKQLSI…MMKWLGVAMK (330 aa)) constitute an AdoMet activation domain. Residues aspartate 337, arginine 528, and 583–584 (YF) each bind S-adenosyl-L-methionine.

Belongs to the vitamin-B12 dependent methionine synthase family.

This is an uncharacterized protein from Haemophilus influenzae (strain ATCC 51907 / DSM 11121 / KW20 / Rd).